The chain runs to 608 residues: Phosphomethylpyrimidine synthase (608 aa).

Residues Asn216, Met245, Tyr274, His310, 330-332 (SRG), 371-374 (DGLR), and Glu410 contribute to the substrate site. A Zn(2+)-binding site is contributed by His414. Tyr437 contributes to the substrate binding site. A Zn(2+)-binding site is contributed by His478. Residues Cys558, Cys561, and Cys566 each contribute to the [4Fe-4S] cluster site.

The protein belongs to the ThiC family. As to quaternary structure, homodimer. Requires [4Fe-4S] cluster as cofactor.

The catalysed reaction is 5-amino-1-(5-phospho-beta-D-ribosyl)imidazole + S-adenosyl-L-methionine = 4-amino-2-methyl-5-(phosphooxymethyl)pyrimidine + CO + 5'-deoxyadenosine + formate + L-methionine + 3 H(+). It functions in the pathway cofactor biosynthesis; thiamine diphosphate biosynthesis. In terms of biological role, catalyzes the synthesis of the hydroxymethylpyrimidine phosphate (HMP-P) moiety of thiamine from aminoimidazole ribotide (AIR) in a radical S-adenosyl-L-methionine (SAM)-dependent reaction. This chain is Phosphomethylpyrimidine synthase, found in Ruegeria sp. (strain TM1040) (Silicibacter sp.).